The following is an 898-amino-acid chain: Interleukin enhancer-binding factor 3 (898 aa).

One can recognise a DZF domain in the interval 5 to 378 (RIFVNDDRHV…PMKRPMEEDG (374 aa)). Residues 52 to 85 (QEKGNSELSEAENMDTPPDDESKEGAGEQKAEHM) are disordered. Acidic residues predominate over residues 60-73 (SEAENMDTPPDDES). T67 carries the phosphothreonine modification. Over residues 74–85 (KEGAGEQKAEHM) the composition is skewed to basic and acidic residues. The residue at position 100 (K100) is an N6-acetyllysine. T188 is modified (phosphothreonine; by PKR). S190 is modified (phosphoserine). A Glycyl lysine isopeptide (Lys-Gly) (interchain with G-Cter in ubiquitin) cross-link involves residue K297. Residue T315 is modified to Phosphothreonine; by PKR. K348 is covalently cross-linked (Glycyl lysine isopeptide (Lys-Gly) (interchain with G-Cter in SUMO1)). The disordered stretch occupies residues 363–402 (TTYAITPMKRPMEEDGEEKSPSKKKKKIQKKEEKADPPQA). Positions 371-389 (KRPMEEDGEEKSPSKKKKK) match the Bipartite nuclear localization signal motif. Residues 372-383 (RPMEEDGEEKSP) are compositionally biased toward basic and acidic residues. Phosphoserine is present on residues S382 and S384. K396 is covalently cross-linked (Glycyl lysine isopeptide (Lys-Gly) (interchain with G-Cter in SUMO2)). A DRBM 1 domain is found at 398–467 (DPPQAMNALM…AVKVLQDMGL (70 aa)). K460 carries the post-translational modification N6-acetyllysine. 2 disordered regions span residues 466–495 (GLPT…IVAP) and 505–524 (PSSV…LTKH). The segment covering 472-481 (EGRDSSKGED) has biased composition (basic and acidic residues). S476, S477, S482, and S486 each carry phosphoserine. A Glycyl lysine isopeptide (Lys-Gly) (interchain with G-Cter in SUMO2) cross-link involves residue K489. The 67-residue stretch at 524-590 (HGKNPVMELN…ALAALEKLFP (67 aa)) folds into the DRBM 2 domain. Phosphothreonine is present on T592. The interaction with PRMT1 stretch occupies residues 609-898 (RGGPKFAAKP…TEHSMNYQYR (290 aa)). Disordered regions lie at residues 631-661 (NEVP…GGAN) and 719-898 (QGDS…YQYR). Residues 644-661 (RGGNIRGRGRGRGFGGAN) show a composition bias toward gly residues. Composition is skewed to low complexity over residues 745–769 (SYSS…SSYG), 783–794 (GSYSSYSNSYNS), and 802–812 (DYSYDSKFNYS). A phosphoserine mark is found at S794, S812, S814, and S818. Gly residues predominate over residues 813–822 (GSGGRSGGNS). Positions 823-834 (YGSSGSSSYNTG) are enriched in low complexity. Residues 835–845 (SHGGYGTGSGG) are compositionally biased toward gly residues. Over residues 846–886 (SSSYQGKQGGYSSQSNYSSPGSSQSYSGPASSYQSSQGGYS) the composition is skewed to low complexity.

In terms of assembly, identified in a IGF2BP1-dependent mRNP granule complex containing untranslated mRNAs. Interacts with FUS and SMN. Interacts (via C-terminus) with PRMT1. Forms a complex with ILF2. Can also bind to PRKDC/XRCC7: this may stabilize the interaction of PRKDC/XRCC7 and the heterodimeric complex of XRCC6/KU70 and XRCC5/KU80. Forms a heteromeric complex with ZNF346 and ILF3. Found in a nuclear export complex with XPO5, ILF3, Ran and double-stranded RNA or double-stranded minihelix VA1 RNA. Found in a nuclear export complex with XPO5, RAN, ILF3, ZNF346 and double-stranded RNA. Interacts with XPO5 and ZNF346. Forms a complex with ILF2, YLPM1, KHDRBS1, RBMX, NCOA5 and PPP1CA. Interacts with AGO1 and AGO2. Interacts with DHX36; this interaction occurs in a RNA-dependent manner. Interacts with ELAVL1; this interaction occurs in a RNA-dependent manner. Interacts with HAVCR2; this interaction promotes ILF3 ubiquitination and subsequent degradation. In terms of processing, phosphorylated at Thr-188 and Thr-315 by PKR in response to RNA viruses. This phosphorylation results in the dissociation of ILF2 from the ILF2-ILF3 complex resulting in a cytoplasmic sequestration of ILF3 where it can bind to viral RNAs and impede viral replication. Methylated by protein arginine N-methyltransferase 1. Ubiquitous. Expressed at high levels in the thymus, testis, ovary and at lower levelss in the spleen.

The protein localises to the nucleus. The protein resides in the nucleolus. Its subcellular location is the cytoplasm. Its function is as follows. RNA-binding protein that plays an essential role in the biogenesis of circular RNAs (circRNAs) which are produced by back-splicing circularization of pre-mRNAs. Within the nucleus, promotes circRNAs processing by stabilizing the regulatory elements residing in the flanking introns of the circularized exons. Plays thereby a role in the back-splicing of a subset of circRNAs. As a consequence, participates in a wide range of transcriptional and post-transcriptional processes. Binds to poly-U elements and AU-rich elements (AREs) in the 3'-UTR of target mRNAs. Upon viral infection, ILF3 accumulates in the cytoplasm and participates in the innate antiviral response. Mechanistically, ILF3 becomes phosphorylated and activated by the double-stranded RNA-activated protein kinase/PKR which releases ILF3 from cellular mature circRNAs. In turn, unbound ILF3 molecules are able to interact with and thus inhibit viral mRNAs. The polypeptide is Interleukin enhancer-binding factor 3 (Ilf3) (Mus musculus (Mouse)).